Consider the following 466-residue polypeptide: Nitric oxide reductase subunit B (466 aa).

The chain crosses the membrane as a helical span at residues 19 to 39 (YFVFALILFVGQILFGLIMGL). Histidine 60 contributes to the heme b binding site. Transmembrane regions (helical) follow at residues 61–81 (TNLLIVWLLFGFMGAAYYLVP), 95–115 (WILFWVFAAAGVLTILGYLLV), 142–162 (ISKAGIVIVALGFLFNVGMTV), 169–189 (AISMVLMTGLIGLALLFLFSF), 205–225 (VVHLWVEGVWELIMGAILAFV), 243–263 (VIIAMALISGIIGTGHHYFWI), 270–290 (LWLGSVFSALEPLPFFAMVLF), and 308–328 (VALWAMGTTVMAFLGAGVWGF). Residues histidine 207, histidine 258, and histidine 259 each contribute to the Fe cation site. Residues histidine 348 and histidine 350 each coordinate heme b. The next 3 helical transmembrane spans lie at 349–369 (GHMAFYGAYAMIVMTIISYAM), 391–411 (FWLMTVAMVFITLFLSAAGVL), and 434–454 (LAIFYWLREGAGVVFLIGLVA).

The protein belongs to the heme-copper respiratory oxidase family. Heterodimer of cytochromes b (large subunit) and c (small subunit).

It localises to the cell membrane. It catalyses the reaction nitrous oxide + 2 Fe(III)-[cytochrome c] + H2O = 2 nitric oxide + 2 Fe(II)-[cytochrome c] + 2 H(+). Its pathway is nitrogen metabolism; nitrate reduction (denitrification); dinitrogen from nitrate: step 3/4. Its function is as follows. Component of the anaerobic respiratory chain that transforms nitrate to dinitrogen (denitrification). NorB is the catalytic subunit of the enzyme complex. Shows proton pump activity across the membrane in denitrifying bacterial cells. The mononitrogen reduction is probably coupled to electron transport phosphorylation. The chain is Nitric oxide reductase subunit B (norB) from Pseudomonas aeruginosa (strain ATCC 15692 / DSM 22644 / CIP 104116 / JCM 14847 / LMG 12228 / 1C / PRS 101 / PAO1).